A 903-amino-acid chain; its full sequence is MALKILERIFGDYSAKVVKRHQRTVALINSLEPEMQKLSDAELAHKTVEFKERIARGETLEQILPEAFAVVREASIRTTGRRPFDVQLIGGIVLHEGNIAEMKTGEGKTLVAAMPLYLNALLGRGCHLVTVNDYLAKVGRDDIGRIYRFLGMSCGLIVHGLTSAQRREAYNCDITYGTNNEFGFDYLRDNMAMHPQDMVHREFFYAIVDEADSILIDEARTPLIISGPSGKPAEMYYTFAKIAERLKRDEDYIVEEKEKRVAPTEEGIAKVEKWLNVDHLYEGENQQLVHYLNNAIKAKELFHRDRDYVVKDGQVIIVDEFTGRLMFGRRWSDGLHQAVEAKEGVKIEEETQTLATITFQNYFRMYKKLAGMTGTALTEEEEFRKIYGLDVIAIPTNKPMIRIDHPDVVYKTVKAKFKAVADDVEERHKRGQPVLVGTVSIEKSEYLSQILTRRGIPHQVLNAKHHEREAEIVAQAGRFGAVTIATNMAGRGTDILLGGNPDFAARQRMRAEGYAPELIVAATDIIPSQDPEVQAAREVYLQYLKEEEAKCAEEAEKVRAVGGLCVIGTERHEARRIDNQLRGRAGRQGDPGESRFYVSLEDDLMRLFGGEMVQNLMNKLGIEDDVPIDSPMVSRAIENAQKKVEARNFDIRKHVLQYDDVMNTQRELIYKQRRQILEGHDTREVVLDAIAATAQSIVEEGVPEDVYFEEWDPSILVALAEDNGIPKGAVNVEDLKAAVEGVRREQEGREKLAKVIEQAAIRAYEEKEARLGAETMRQLERFLLLRTVDEKWMDHLDAMDDLREGVGLRAYGQRDPLIEYKMEAMEMFNNMIRSIQRDMVRNLFIFEVVREPQRPRIMIESGSQGAAPRQPVRAEGKKVGRNDPCPCGSGKKYKFCCGRAANA.

ATP is bound by residues glutamine 87, 105–109, and aspartate 494; that span reads GEGKT. The tract at residues 861 to 883 is disordered; it reads SGSQGAAPRQPVRAEGKKVGRND. Residues 872–881 show a composition bias toward basic and acidic residues; sequence VRAEGKKVGR. Cysteine 885, cysteine 887, cysteine 896, and cysteine 897 together coordinate Zn(2+).

The protein belongs to the SecA family. As to quaternary structure, monomer and homodimer. Part of the essential Sec protein translocation apparatus which comprises SecA, SecYEG and auxiliary proteins SecDF. Other proteins may also be involved. The cofactor is Zn(2+).

The protein resides in the cell membrane. It localises to the cytoplasm. The catalysed reaction is ATP + H2O + cellular proteinSide 1 = ADP + phosphate + cellular proteinSide 2.. Its function is as follows. Part of the Sec protein translocase complex. Interacts with the SecYEG preprotein conducting channel. Has a central role in coupling the hydrolysis of ATP to the transfer of proteins into and across the cell membrane, serving as an ATP-driven molecular motor driving the stepwise translocation of polypeptide chains across the membrane. The polypeptide is Protein translocase subunit SecA (Symbiobacterium thermophilum (strain DSM 24528 / JCM 14929 / IAM 14863 / T)).